A 192-amino-acid polypeptide reads, in one-letter code: uncharacterized protein (192 aa).

The 132-residue stretch at 29–160 folds into the Nudix hydrolase domain; sequence HRQAAVLIPI…PLDIYRRGDS (132 aa). Positions 67–89 match the Nudix box motif; that stretch reads GAVDDTDASAIAAALREAEEEVA. Mg(2+)-binding residues include glutamate 83 and glutamate 87.

The protein belongs to the Nudix hydrolase family. PCD1 subfamily. It depends on Mn(2+) as a cofactor. The cofactor is Mg(2+).

Probably mediates the hydrolysis of some nucleoside diphosphate derivatives. This is an uncharacterized protein from Escherichia coli (strain K12).